A 1488-amino-acid chain; its full sequence is Chromosome partition protein MukB (1488 aa).

34 to 41 (GGNGAGKS) provides a ligand contact to ATP. Coiled-coil stretches lie at residues 326 to 418 (LEAD…QYNQ), 444 to 472 (LDTF…QTAH), and 509 to 602 (RHLA…QRAP). Positions 666-783 (PGGAEDQRLN…SLPIFGRAAR (118 aa)) are flexible hinge. Coiled-coil stretches lie at residues 835–923 (EAEI…AKLE), 977–1116 (EMLS…AKAG), and 1209–1265 (VEAI…LQSV). The segment at 1049–1074 (ADSGAEERARQRRDELHAQLSNNRSR) is disordered. The span at 1051-1065 (SGAEERARQRRDELH) shows a compositional bias: basic and acidic residues.

Belongs to the SMC family. MukB subfamily. Homodimerization via its hinge domain. Binds to DNA via its C-terminal region. Interacts, and probably forms a ternary complex, with MukE and MukF via its C-terminal region. The complex formation is stimulated by calcium or magnesium. Interacts with tubulin-related protein FtsZ.

It localises to the cytoplasm. The protein resides in the nucleoid. In terms of biological role, plays a central role in chromosome condensation, segregation and cell cycle progression. Functions as a homodimer, which is essential for chromosome partition. Involved in negative DNA supercoiling in vivo, and by this means organize and compact chromosomes. May achieve or facilitate chromosome segregation by condensation DNA from both sides of a centrally located replisome during cell division. This chain is Chromosome partition protein MukB, found in Salmonella typhimurium (strain LT2 / SGSC1412 / ATCC 700720).